Consider the following 243-residue polypeptide: Tyrosine recombinase XerD-like (243 aa).

The Core-binding (CB) domain occupies 1-72 (MKEYIRPFLN…AVNQFLYFLY (72 aa)). Residues 85–243 (LPKVSVSKEQ…KTMITLEKYR (159 aa)) enclose the Tyr recombinase domain. Catalysis depends on residues lysine 149 and arginine 210. The O-(3'-phospho-DNA)-tyrosine intermediate role is filled by tyrosine 242.

The protein belongs to the 'phage' integrase family. XerD-like subfamily.

The protein localises to the cytoplasm. Putative tyrosine recombinase. Not involved in the cutting and rejoining of the recombining DNA molecules on dif(SL) site. The polypeptide is Tyrosine recombinase XerD-like (Streptococcus sanguinis (strain SK36)).